Reading from the N-terminus, the 152-residue chain is Ribonuclease pancreatic (152 aa).

Positions 1–24 are cleaved as a signal peptide; sequence MALDKSVILLPLLVLVLLVLGCLG. Substrate-binding residues include K31 and R34. The Proton acceptor role is filled by H36. A glycan (N-linked (GlcNAc...) asparagine) is linked at N46. Disulfide bonds link C50-C108, C64-C119, C82-C134, and C89-C96. Substrate-binding positions include 65–69, K90, and R109; that span reads KPVNT. An N-linked (GlcNAc...) asparagine glycan is attached at N112. Residue H143 is the Proton donor of the active site.

It belongs to the pancreatic ribonuclease family. As to quaternary structure, monomer. Interacts with and forms tight 1:1 complexes with RNH1. Dimerization of two such complexes may occur. Interaction with RNH1 inhibits this protein.

It localises to the secreted. The catalysed reaction is an [RNA] containing cytidine + H2O = an [RNA]-3'-cytidine-3'-phosphate + a 5'-hydroxy-ribonucleotide-3'-[RNA].. It catalyses the reaction an [RNA] containing uridine + H2O = an [RNA]-3'-uridine-3'-phosphate + a 5'-hydroxy-ribonucleotide-3'-[RNA].. Its function is as follows. Endonuclease that catalyzes the cleavage of RNA on the 3' side of pyrimidine nucleotides. Acts on single-stranded and double-stranded RNA. This Miopithecus talapoin (Angolan talapoin) protein is Ribonuclease pancreatic (RNASE1).